The sequence spans 103 residues: Pilin (103 aa).

The N-terminal stretch at Met1–Ala30 is a signal peptide. A compositionally biased stretch (basic and acidic residues) spans His61–Asp76. A disordered region spans residues His61–Ala103. A compositionally biased stretch (pro residues) spans Ala92–Ala103.

This sequence belongs to the mycobacterial pilin family. Forms a homomer composed of subunits assembled in a large structure.

Its subcellular location is the fimbrium. Structural subunit of pili, which are thin, flexible, coiled-coil, aggregative fibers. Mediates adhesion to the extracellular matrix, an event that would facilitate direct interaction with the host epithelium during infection in the lung or other tissues. This Mycobacterium bovis (strain ATCC BAA-935 / AF2122/97) protein is Pilin (mtp).